Here is a 329-residue protein sequence, read N- to C-terminus: Sex comb on midleg-like protein 1 (329 aa).

The interval 136–160 (SYSPTLPVSRRENNSPSNLPRPSFC) is disordered. 2 positions are modified to phosphoserine: S138 and S238. The region spanning 258–325 (WSVEAVVLFL…YYIDRLKQGK (68 aa)) is the SAM domain.

It belongs to the SCM family.

It is found in the nucleus. Functionally, putative Polycomb group (PcG) protein. PcG proteins act by forming multiprotein complexes, which are required to maintain the transcriptionally repressive state of homeotic genes throughout development. May be involved in spermatogenesis during sexual maturation. This is Sex comb on midleg-like protein 1 (SCML1) from Pongo pygmaeus (Bornean orangutan).